A 207-amino-acid chain; its full sequence is Uracil phosphoribosyltransferase (207 aa).

5-phospho-alpha-D-ribose 1-diphosphate-binding positions include R77, R102, and 129–137 (DPMLATGGS). Uracil-binding positions include I192 and 197–199 (GDA). D198 provides a ligand contact to 5-phospho-alpha-D-ribose 1-diphosphate.

The protein belongs to the UPRTase family. The cofactor is Mg(2+).

The enzyme catalyses UMP + diphosphate = 5-phospho-alpha-D-ribose 1-diphosphate + uracil. The protein operates within pyrimidine metabolism; UMP biosynthesis via salvage pathway; UMP from uracil: step 1/1. With respect to regulation, allosterically activated by GTP. In terms of biological role, catalyzes the conversion of uracil and 5-phospho-alpha-D-ribose 1-diphosphate (PRPP) to UMP and diphosphate. The sequence is that of Uracil phosphoribosyltransferase from Mycoplasma mobile (strain ATCC 43663 / 163K / NCTC 11711) (Mesomycoplasma mobile).